A 480-amino-acid polypeptide reads, in one-letter code: Aromatic-L-amino-acid decarboxylase (480 aa).

Met-1 is modified (N-acetylmethionine). 2 tandem repeats follow at residues 58–115 (GDIE…TELE) and 118–178 (MLDW…TQAA). The 2 X approximate tandem repeats stretch occupies residues 58 to 178 (GDIERIIMPG…AASPELTQAA (121 aa)). Residue Thr-82 participates in substrate binding. Ala-148 and Ser-149 together coordinate pyridoxal 5'-phosphate. His-192 contacts substrate. The pyridoxal 5'-phosphate site is built by Thr-246 and Asn-300. Lys-303 carries the N6-(pyridoxal phosphate)lysine modification.

The protein belongs to the group II decarboxylase family. In terms of assembly, homodimer. It depends on pyridoxal 5'-phosphate as a cofactor.

It catalyses the reaction L-dopa + H(+) = dopamine + CO2. The catalysed reaction is 5-hydroxy-L-tryptophan + H(+) = serotonin + CO2. It participates in catecholamine biosynthesis; dopamine biosynthesis; dopamine from L-tyrosine: step 2/2. Catalyzes the decarboxylation of L-3,4-dihydroxyphenylalanine (DOPA) to dopamine and L-5-hydroxytryptophan to serotonin. This chain is Aromatic-L-amino-acid decarboxylase (DDC), found in Cavia porcellus (Guinea pig).